Reading from the N-terminus, the 352-residue chain is Protein-glutamate methylesterase/protein-glutamine glutaminase (352 aa).

The Response regulatory domain maps to 5 to 123 (RILIVDDSVI…SKEKAIEYIR (119 aa)). Residue D56 is modified to 4-aspartylphosphate. The region spanning 166 to 352 (EIVAIGVSTG…LAEEIIRRIG (187 aa)) is the CheB-type methylesterase domain. Active-site residues include S173, H200, and D296.

Belongs to the CheB family. Phosphorylated by CheA. Phosphorylation of the N-terminal regulatory domain activates the methylesterase activity.

The protein resides in the cytoplasm. It catalyses the reaction [protein]-L-glutamate 5-O-methyl ester + H2O = L-glutamyl-[protein] + methanol + H(+). The catalysed reaction is L-glutaminyl-[protein] + H2O = L-glutamyl-[protein] + NH4(+). Functionally, involved in chemotaxis. Part of a chemotaxis signal transduction system that modulates chemotaxis in response to various stimuli. Catalyzes the demethylation of specific methylglutamate residues introduced into the chemoreceptors (methyl-accepting chemotaxis proteins or MCP) by CheR. Also mediates the irreversible deamidation of specific glutamine residues to glutamic acid. The chain is Protein-glutamate methylesterase/protein-glutamine glutaminase from Trichodesmium erythraeum (strain IMS101).